The chain runs to 405 residues: Tryptophan synthase beta chain (405 aa).

The residue at position 98 (K98) is an N6-(pyridoxal phosphate)lysine.

Belongs to the TrpB family. Tetramer of two alpha and two beta chains. The cofactor is pyridoxal 5'-phosphate.

The enzyme catalyses (1S,2R)-1-C-(indol-3-yl)glycerol 3-phosphate + L-serine = D-glyceraldehyde 3-phosphate + L-tryptophan + H2O. Its pathway is amino-acid biosynthesis; L-tryptophan biosynthesis; L-tryptophan from chorismate: step 5/5. The beta subunit is responsible for the synthesis of L-tryptophan from indole and L-serine. This is Tryptophan synthase beta chain from Stenotrophomonas maltophilia (strain R551-3).